Consider the following 376-residue polypeptide: Lipoyl synthase 1, chloroplastic (376 aa).

Residues 1 to 13 (MIEQSLSKPSFSL) are compositionally biased toward polar residues. Disordered stretches follow at residues 1–25 (MIEQSLSKPSFSLSIPIPQPPKSKS) and 47–75 (IDAKHPQISSINSNGGGKMGSYTGRDPNV). A chloroplast-targeting transit peptide spans 1-35 (MIEQSLSKPSFSLSIPIPQPPKSKSSFLCSYSKIR). Residues Cys-107, Cys-112, Cys-118, Cys-138, Cys-142, Cys-145, and Ser-353 each contribute to the [4Fe-4S] cluster site. Residues 121 to 342 (GGGDGIATAT…KEYGESIGFR (222 aa)) form the Radical SAM core domain.

Belongs to the radical SAM superfamily. Lipoyl synthase family. The cofactor is [4Fe-4S] cluster.

It is found in the plastid. The protein resides in the chloroplast. The catalysed reaction is [[Fe-S] cluster scaffold protein carrying a second [4Fe-4S](2+) cluster] + N(6)-octanoyl-L-lysyl-[protein] + 2 oxidized [2Fe-2S]-[ferredoxin] + 2 S-adenosyl-L-methionine + 4 H(+) = [[Fe-S] cluster scaffold protein] + N(6)-[(R)-dihydrolipoyl]-L-lysyl-[protein] + 4 Fe(3+) + 2 hydrogen sulfide + 2 5'-deoxyadenosine + 2 L-methionine + 2 reduced [2Fe-2S]-[ferredoxin]. The protein operates within protein modification; protein lipoylation via endogenous pathway; protein N(6)-(lipoyl)lysine from octanoyl-[acyl-carrier-protein]: step 2/2. Its function is as follows. Catalyzes the radical-mediated insertion of two sulfur atoms into the C-6 and C-8 positions of the octanoyl moiety bound to the lipoyl domains of lipoate-dependent enzymes, thereby converting the octanoylated domains into lipoylated derivatives. This Populus trichocarpa (Western balsam poplar) protein is Lipoyl synthase 1, chloroplastic.